The sequence spans 447 residues: MAPVVRFAPSPTGYLHIGNARPALFNALFARRAGGRFVLRLDDTDTARSTPEFAAAIVEDLAWLGIVPDETLRQSDRIALYDAAAERLRAAGRLYPAYETSDELERRRRRQLGRGLPPVYDRAALRLTAEERAAFEAEGRRPHWRFRLDPGPVTWTDLVRGPCHVEADSLSDPVLVREDGSYLYTLPSVVDDAEIGITHVIRGEDHVTNTAVQIQIFRALGAAVPVFAHHNLLTTASGEGLSKRLGHLSLRGLRDQGYEPGAVASLAVLTGSSEAVRAVPDLDGLAALLDLAHVSRAPAKFDPHDLDQLNARLLHEMPLAAAAPRLAALGIPAAAAEPFWAAVRANLATFSDAAGWWRVVAGPAAPLIADPALAARAAALLPPEPWDATTWKSWTEAVKAATGLKGKALFLPLRLALTGLDHGPDLSGLLPLIGRERAQRRLRGEAA.

A 'HIGH' region motif is present at residues Pro9–Asn19. The 'KMSKS' region signature appears at Gly240–Arg244. Lys243 serves as a coordination point for ATP.

The protein belongs to the class-I aminoacyl-tRNA synthetase family. Glutamate--tRNA ligase type 1 subfamily. Monomer.

The protein localises to the cytoplasm. It catalyses the reaction tRNA(Glu) + L-glutamate + ATP = L-glutamyl-tRNA(Glu) + AMP + diphosphate. Its function is as follows. Catalyzes the attachment of glutamate to tRNA(Glu) in a two-step reaction: glutamate is first activated by ATP to form Glu-AMP and then transferred to the acceptor end of tRNA(Glu). In Methylobacterium sp. (strain 4-46), this protein is Glutamate--tRNA ligase 2.